Consider the following 221-residue polypeptide: 5'-nucleotidase (221 aa).

The active-site Nucleophile is aspartate 14.

It belongs to the HAD-like hydrolase superfamily. Mn(2+) serves as cofactor. The cofactor is Mg(2+).

The enzyme catalyses a ribonucleoside 5'-phosphate + H2O = a ribonucleoside + phosphate. In terms of biological role, specifically dephosphorylates nucleoside 5'-monophosphates to nucleosides and inorganic phosphate. Displays high activity toward 5'-UMP and 5'-IMP, significant activity against 5'-XMP and 5'-TMP, and low activity against 5'-CMP. This is 5'-nucleotidase from Pseudomonas aeruginosa (strain ATCC 15692 / DSM 22644 / CIP 104116 / JCM 14847 / LMG 12228 / 1C / PRS 101 / PAO1).